The primary structure comprises 167 residues: 2-C-methyl-D-erythritol 2,4-cyclodiphosphate synthase (167 aa).

The a divalent metal cation site is built by aspartate 11 and histidine 13. Residues 11–13 (DIH) and 37–38 (HS) each bind 4-CDP-2-C-methyl-D-erythritol 2-phosphate. Histidine 45 is an a divalent metal cation binding site. 4-CDP-2-C-methyl-D-erythritol 2-phosphate-binding positions include 59 to 61 (DIG), 64 to 68 (FSDTD), 103 to 109 (AQAPKMA), and arginine 145.

Belongs to the IspF family. As to quaternary structure, homotrimer. It depends on a divalent metal cation as a cofactor.

The enzyme catalyses 4-CDP-2-C-methyl-D-erythritol 2-phosphate = 2-C-methyl-D-erythritol 2,4-cyclic diphosphate + CMP. It functions in the pathway isoprenoid biosynthesis; isopentenyl diphosphate biosynthesis via DXP pathway; isopentenyl diphosphate from 1-deoxy-D-xylulose 5-phosphate: step 4/6. Its function is as follows. Involved in the biosynthesis of isopentenyl diphosphate (IPP) and dimethylallyl diphosphate (DMAPP), two major building blocks of isoprenoid compounds. Catalyzes the conversion of 4-diphosphocytidyl-2-C-methyl-D-erythritol 2-phosphate (CDP-ME2P) to 2-C-methyl-D-erythritol 2,4-cyclodiphosphate (ME-CPP) with a corresponding release of cytidine 5-monophosphate (CMP). The protein is 2-C-methyl-D-erythritol 2,4-cyclodiphosphate synthase of Nitrosomonas eutropha (strain DSM 101675 / C91 / Nm57).